The primary structure comprises 337 residues: Inositol 2-dehydrogenase (337 aa).

This sequence belongs to the Gfo/Idh/MocA family. As to quaternary structure, homotetramer.

It catalyses the reaction myo-inositol + NAD(+) = scyllo-inosose + NADH + H(+). Its function is as follows. Involved in the oxidation of myo-inositol (MI) to 2-keto-myo-inositol (2KMI or 2-inosose). The chain is Inositol 2-dehydrogenase from Burkholderia ambifaria (strain MC40-6).